We begin with the raw amino-acid sequence, 462 residues long: Adenosylhomocysteinase (462 aa).

Substrate is bound by residues Thr-55, Asp-128, and Glu-188. 189–191 (TTT) is an NAD(+) binding site. The substrate site is built by Lys-218 and Asp-222. NAD(+)-binding positions include Asn-223, 252–257 (GYGDVG), Glu-275, Asn-310, 331–333 (IGH), and Asn-376.

Belongs to the adenosylhomocysteinase family. NAD(+) is required as a cofactor.

The protein resides in the cytoplasm. It carries out the reaction S-adenosyl-L-homocysteine + H2O = L-homocysteine + adenosine. It participates in amino-acid biosynthesis; L-homocysteine biosynthesis; L-homocysteine from S-adenosyl-L-homocysteine: step 1/1. May play a key role in the regulation of the intracellular concentration of adenosylhomocysteine. This Roseobacter denitrificans (strain ATCC 33942 / OCh 114) (Erythrobacter sp. (strain OCh 114)) protein is Adenosylhomocysteinase.